The following is a 201-amino-acid chain: B-cell CLL/lymphoma 7 protein family member B-B (201 aa).

The disordered stretch occupies residues 104-201 (QSNTKVDSSS…VCTEHNSTVS (98 aa)).

The protein belongs to the BCL7 family.

The polypeptide is B-cell CLL/lymphoma 7 protein family member B-B (Danio rerio (Zebrafish)).